Reading from the N-terminus, the 205-residue chain is MLLCDIGNTTYHFFDENSSYKEDAKLFNPSSIKREVFYICVNSSVKERLSLLDNWIDLSLHVDMSRYYKTMGIDRIMACEAIESGVVVDAGSAITVDIIKNGNFEGGFIYAGVKAMNECYKNISAQLEYSFNFELDLDKMPKNSRDAISYGYLGLLYKEVASYGMKIYLTGGDAGQFSKLFLNSDVDELLLFKGMKNIMKKANLC.

5 to 12 lines the ATP pocket; it reads DIGNTTYH. Residues Tyr68 and 72-75 each bind substrate; that span reads GIDR. The active-site Proton acceptor is Asp74. Asp89 contributes to the K(+) binding site. Ser92 serves as a coordination point for ATP. A substrate-binding site is contributed by Ser144.

The protein belongs to the type III pantothenate kinase family. In terms of assembly, homodimer. The cofactor is NH4(+). Requires K(+) as cofactor.

The protein localises to the cytoplasm. The enzyme catalyses (R)-pantothenate + ATP = (R)-4'-phosphopantothenate + ADP + H(+). Its pathway is cofactor biosynthesis; coenzyme A biosynthesis; CoA from (R)-pantothenate: step 1/5. Its function is as follows. Catalyzes the phosphorylation of pantothenate (Pan), the first step in CoA biosynthesis. This Sulfurimonas denitrificans (strain ATCC 33889 / DSM 1251) (Thiomicrospira denitrificans (strain ATCC 33889 / DSM 1251)) protein is Type III pantothenate kinase.